The following is an 80-amino-acid chain: Putative membrane protein insertion efficiency factor (80 aa).

Residues 61–80 are disordered; the sequence is KTGKDPIPDHFSLKRNQEGE. Over residues 62-80 the composition is skewed to basic and acidic residues; sequence TGKDPIPDHFSLKRNQEGE.

It belongs to the UPF0161 family.

Its subcellular location is the cell membrane. In terms of biological role, could be involved in insertion of integral membrane proteins into the membrane. The sequence is that of Putative membrane protein insertion efficiency factor from Streptococcus pneumoniae (strain CGSP14).